The following is a 525-amino-acid chain: Probable bifunctional tRNA threonylcarbamoyladenosine biosynthesis protein (525 aa).

Residues 1-322 (MPEKRVLGIE…FRSDQVEVTW (322 aa)) are kae1. Fe cation-binding residues include histidine 106, histidine 110, and tyrosine 127. L-threonylcarbamoyladenylate is bound by residues 127 to 131 (YASGA), aspartate 159, glycine 172, glutamate 176, and asparagine 255. Aspartate 283 is a Fe cation binding site. The region spanning 331–525 (APGQSETAER…HEIELRGRYL (195 aa)) is the Protein kinase domain. ATP is bound by residues 338-346 (AERGAEASV) and lysine 355. Aspartate 442 functions as the Proton acceptor; for kinase activity in the catalytic mechanism.

This sequence in the N-terminal section; belongs to the KAE1 / TsaD family. In the C-terminal section; belongs to the protein kinase superfamily. Tyr protein kinase family. BUD32 subfamily. Component of the KEOPS complex that consists of Kae1, Bud32, Cgi121 and Pcc1; the whole complex dimerizes. Requires Fe(2+) as cofactor.

The protein localises to the cytoplasm. It carries out the reaction L-seryl-[protein] + ATP = O-phospho-L-seryl-[protein] + ADP + H(+). The catalysed reaction is L-threonyl-[protein] + ATP = O-phospho-L-threonyl-[protein] + ADP + H(+). It catalyses the reaction L-threonylcarbamoyladenylate + adenosine(37) in tRNA = N(6)-L-threonylcarbamoyladenosine(37) in tRNA + AMP + H(+). Functionally, required for the formation of a threonylcarbamoyl group on adenosine at position 37 (t(6)A37) in tRNAs that read codons beginning with adenine. Is a component of the KEOPS complex that is probably involved in the transfer of the threonylcarbamoyl moiety of threonylcarbamoyl-AMP (TC-AMP) to the N6 group of A37. The Kae1 domain likely plays a direct catalytic role in this reaction. The Bud32 domain probably displays kinase activity that regulates Kae1 function. The sequence is that of Probable bifunctional tRNA threonylcarbamoyladenosine biosynthesis protein from Methanocorpusculum labreanum (strain ATCC 43576 / DSM 4855 / Z).